The following is a 392-amino-acid chain: tRNA (guanine-N(7)-)-methyltransferase (392 aa).

S-adenosyl-L-methionine is bound by residues Glu123, Glu148, and Asp175. 2 residues coordinate substrate: Lys201 and Asp231.

It belongs to the class I-like SAM-binding methyltransferase superfamily. TrmB family.

It catalyses the reaction guanosine(46) in tRNA + S-adenosyl-L-methionine = N(7)-methylguanosine(46) in tRNA + S-adenosyl-L-homocysteine. It functions in the pathway tRNA modification; N(7)-methylguanine-tRNA biosynthesis. In terms of biological role, catalyzes the formation of N(7)-methylguanine at position 46 (m7G46) in tRNA. The chain is tRNA (guanine-N(7)-)-methyltransferase from Campylobacter jejuni subsp. doylei (strain ATCC BAA-1458 / RM4099 / 269.97).